The following is a 1378-amino-acid chain: MEPGVRARSGAPQPASPVLWRARPAGGGGASSWLLLDGNSWLLCYGFLYLALYAQVSQSKPCERTGSCFSGRCVNSTCLCDPGWVGDQCQHCQGRFKLTEPSGYLTDGPINYKYKTKCTWLIEGYPNAVLRLRFNHFATECSWDHMYVYDGDSIYAPLVAVLSGLIVPEVRGNETVPEVVTTSGYALLHFFSDAAYNLTGFNIFYSINSCPNNCSGHGKCTTSVSVASQVYCECDKYWKGEACDIPYCKANCGSPDHGYCDLTGEKLCVCNDSWQGPDCSLNVPSTESYWILPNVKPFSPSVGRASHKAVLHGKFMWVIGGYTFNYSSFQMVLNYNLESSIWNVGAVSRGPLQRYGHSLALYQENIFMYGGRMETSDGNVTDELWVFNVRSQSWSTKTPTVLGHSQQYAVEGHSAHIMELDSRDVVMIVIFGYSAIYGYTSSIQEYHISSNTWLVPETKGAIVQGGYGHTSVYDEVTKSIYVHGGYKALPGNKYGLVDDLYKYEVNTRTWTILKESGFARYLHSAVLINGAMLIFGGNTHNDTSLSNGAKCFSADFLAYDIACDEWKTLPKPNLHRDVNRFGHSAVVINGSMYIFGGFSSVLLNDILVYKPPNCKAFRDEELCRNAGPGIKCVWNKNHCESWESGNTNNILRAKCPPKTAATDDRCYRYADCASCTANTNGCQWCDDKKCISASSNCSTSVRNYTKCHIRNEQICNKLTSCKSCSLNLNCQWDQRQQECQALPAHLCGEGWNHVGDACLRINSSRESYDNAKLYCYNLSGNLASLTTSKEVEFVLDEIQKFTQQKVSPWVGLRKINISYWGWEDMSPFTNTSLQWLPGEPNDSGFCAYLERAAVAGLKANPCTSMADGLVCEKPVVSPNQNARPCKKPCSLRTSCANCTSSGMECMWCSSTKRCVDSNAYIISFPYGQCLEWQTATCSPQNCSGLRTCGQCLEQPGCGWCNDPSNTGRGYCIEGSSRGPMKLAGVHNSDVVLDTSLCPKEKNYEWSFIQCPACQCNGHSTCINNNVCEQCKNLTTGRQCQECMPGYYGDPTNGGQCTACTCGGHANVCHLHTGKCFCTTKGIKGDQCQLCDSENRYVGNPLRGTCYYSLLIDYQFTFSLLQEDDRHHTAINFIANPEQSNKNLDISINASNNFNLNITWSVGSTGGTISGEETPIVSKTNIKEYRDSFSYEKFNFRSNPNITFYVYVSNFSWPIKIQIAFSQHNTIMDLVQFFVTFFSCFLSLLLVAAVVWKIKQTCWASRRREQLLRERQQMASRPFASVDVALEVGAEQTDFLRGPLEGAPKPIAIEPCAGNRAAVLTVFLCLPRGSSGAPPPGQSGLAIASALIDISQQKPSDNKDKTSGVRNRKHLSTRQGTCV.

Positions 1–51 are cleaved as a signal peptide; that stretch reads MEPGVRARSGAPQPASPVLWRARPAGGGGASSWLLLDGNSWLLCYGFLYLA. The 39-residue stretch at 52 to 90 folds into the EGF-like 1 domain; it reads LYAQVSQSKPCERTGSCFSGRCVNSTCLCDPGWVGDQCQ. Over 52–1229 the chain is Extracellular; sequence LYAQVSQSKP…FSQHNTIMDL (1178 aa). Intrachain disulfides connect cysteine 62–cysteine 78, cysteine 80–cysteine 89, and cysteine 92–cysteine 118. An N-linked (GlcNAc...) asparagine glycan is attached at asparagine 75. One can recognise a CUB domain in the interval 92–208; that stretch reads CQGRFKLTEP…TGFNIFYSIN (117 aa). Residues asparagine 173 and asparagine 197 are each glycosylated (N-linked (GlcNAc...) asparagine). Residues 206–244 enclose the EGF-like 2 domain; the sequence is SINSCPNNCSGHGKCTTSVSVASQVYCECDKYWKGEACD. Disulfide bonds link cysteine 210–cysteine 220, cysteine 214–cysteine 232, and cysteine 234–cysteine 243. Kelch repeat units lie at residues 315-364, 366-414, 426-474, 479-530, 532-590, and 591-637; these read FMWV…LYQE, IFMY…EGHS, VMIV…SVYD, SIYV…LING, MLIF…VING, and SMYI…WNKN. N-linked (GlcNAc...) asparagine glycosylation occurs at asparagine 379. PSI domains follow at residues 613 to 656, 665 to 708, and 714 to 759; these read NCKA…AKCP, RCYR…TKCH, and ICNK…DACL. A glycan (N-linked (GlcNAc...) asparagine) is linked at asparagine 703. The C-type lectin domain occupies 754–872; the sequence is VGDACLRINS…TSMADGLVCE (119 aa). A disulfide bond links cysteine 775 and cysteine 871. N-linked (GlcNAc...) asparagine glycosylation is found at asparagine 777 and asparagine 897. PSI domains lie at 888–938 and 941–1011; these read PCSL…ATCS and NCSG…IQCP. 8 cysteine pairs are disulfide-bonded: cysteine 1013–cysteine 1021, cysteine 1015–cysteine 1027, cysteine 1030–cysteine 1039, cysteine 1042–cysteine 1056, cysteine 1059–cysteine 1068, cysteine 1061–cysteine 1075, cysteine 1077–cysteine 1087, and cysteine 1090–cysteine 1105. Laminin EGF-like domains follow at residues 1013–1058 and 1059–1107; these read CQCN…QCTA and CTCG…TCYY. Asparagine 1156 carries an N-linked (GlcNAc...) asparagine glycan. The helical transmembrane segment at 1230–1250 threads the bilayer; sequence VQFFVTFFSCFLSLLLVAAVV. The Cytoplasmic segment spans residues 1251–1378; that stretch reads WKIKQTCWAS…HLSTRQGTCV (128 aa). The segment at 1287 to 1324 is interaction with MC4R; the sequence is VGAEQTDFLRGPLEGAPKPIAIEPCAGNRAAVLTVFLC. The tract at residues 1351–1378 is disordered; the sequence is QQKPSDNKDKTSGVRNRKHLSTRQGTCV.

In terms of assembly, interacts with MC4R. As to expression, highly expressed in brain, heart, lung, kidney and liver. In the central nervous system, it is highly expressed in the dentate gyrus, CA1-3 regions of the hippocampus, and the ventral taenia tecta.

The protein resides in the cell membrane. Functionally, may play a role in melanocortin signaling pathways that regulate energy homeostasis. The polypeptide is Attractin-like protein 1 (Atrnl1) (Mus musculus (Mouse)).